Here is a 195-residue protein sequence, read N- to C-terminus: PRS fimbrial minor pilin protein (195 aa).

The N-terminal stretch at 1-22 (MRLRFSVPLFFFGCVFVHGVFA) is a signal peptide. Cysteine 58 and cysteine 97 are joined by a disulfide.

This sequence belongs to the fimbrial protein family.

The protein resides in the secreted. The protein localises to the fimbrium. In terms of biological role, fimbriae (also called pili), polar filaments radiating from the surface of the bacterium to a length of 0.5-1.5 micrometers and numbering 100-300 per cell, enable bacteria to colonize the epithelium of specific host organs. Functionally, seems to anchor the pilus to the bacterial cell. In addition the stoichiometric relationship between PrsH and PrsA determines the pilus length. The protein is PRS fimbrial minor pilin protein (prsH) of Escherichia coli.